The primary structure comprises 205 residues: UPF0316 protein Cthe_2213 (205 aa).

3 helical membrane passes run 15-37 (LPLL…IIFV), 44-64 (LAPV…SQIM), and 70-90 (FVCY…GIII).

Belongs to the UPF0316 family.

The protein resides in the cell membrane. This is UPF0316 protein Cthe_2213 from Acetivibrio thermocellus (strain ATCC 27405 / DSM 1237 / JCM 9322 / NBRC 103400 / NCIMB 10682 / NRRL B-4536 / VPI 7372) (Clostridium thermocellum).